Consider the following 217-residue polypeptide: Membrane-associated progesterone receptor component 2 (217 aa).

Residue Ser15 is glycosylated (O-linked (Xyl...) (chondroitin sulfate) serine). A helical transmembrane segment spans residues 40–62; it reads ALLATGGEMLLNVALVALVLLGA. Ser84, Ser98, and Ser202 each carry phosphoserine. Positions 96–195 constitute a Cytochrome b5 heme-binding domain; sequence DFSLEQLRQY…EKYDYVGRLL (100 aa). Residues 196-217 are disordered; the sequence is KPGEEPSEYTDEEDTKDHSKQD. Over residues 200 to 209 the composition is skewed to acidic residues; it reads EPSEYTDEED. Tyr204 bears the Phosphotyrosine mark. Thr205 carries the post-translational modification Phosphothreonine.

Belongs to the cytochrome b5 family. MAPR subfamily. In terms of assembly, interacts with PGRMC1. Interacts with AAAS. In terms of tissue distribution, expressed in brown adipose tissue, white adipose tissue, liver, heart, skeletal muscle, brain and adrenal gland.

Its subcellular location is the membrane. It localises to the nucleus envelope. The protein resides in the endoplasmic reticulum. It is found in the secreted. Functionally, required for the maintenance of uterine histoarchitecture and normal female reproductive lifespan. May serve as a universal non-classical progesterone receptor in the uterus. Intracellular heme chaperone required for delivery of labile, or signaling heme, to the nucleus. Plays a role in adipocyte function and systemic glucose homeostasis. In brown fat, which has a high demand for heme, delivery of labile heme in the nucleus regulates the activity of heme-responsive transcriptional repressors such as NR1D1 and BACH1. The protein is Membrane-associated progesterone receptor component 2 of Mus musculus (Mouse).